Reading from the N-terminus, the 67-residue chain is Myrmicitoxin(1)-Pm6a (67 aa).

The first 25 residues, 1 to 25 (MRSLYLSFSLTIIFVLVIMHAEAKA), serve as a signal peptide directing secretion. A propeptide spanning residues 26-37 (ISEPNAIAEADP) is cleaved from the precursor. The residue at position 66 (Val66) is a Valine amide.

This sequence belongs to the formicidae venom clade 3 family. Expressed by the venom gland.

It localises to the secreted. In terms of biological role, toxin that causes a rapid and irreversible paralysis when intrathoracically injected into insects (blowflies). Does not cause spontaneous nocifensive behaviors by intraplantar injection in mice. Exhibits hemolytic and cytotoxic activities on HEK293 cells. In Pogonomyrmex maricopa (Maricopa harvester ant), this protein is Myrmicitoxin(1)-Pm6a.